The following is a 178-amino-acid chain: PEST proteolytic signal-containing nuclear protein (178 aa).

Over residues 1-15 the composition is skewed to basic and acidic residues; sequence MADGKAGEEKPEKPQ. The interval 1–82 is disordered; the sequence is MADGKAGEEK…FAIGSQTARK (82 aa). Ala-2 is modified (N-acetylalanine). The segment covering 37 to 47 has biased composition (low complexity); the sequence is SSSNGGESSSR. Ser-53 bears the Phosphoserine mark. Lys-64 is subject to N6-acetyllysine. 3 positions are modified to phosphoserine: Ser-77, Ser-87, and Ser-119. The tract at residues 134–158 is disordered; it reads NIGRDTPTSAGPNSFNKGKHGFSDN. Residue Thr-139 is modified to Phosphothreonine. A compositionally biased stretch (polar residues) spans 139 to 149; the sequence is TPTSAGPNSFN. Phosphoserine is present on Ser-147. N6-acetyllysine occurs at positions 150 and 152.

In terms of assembly, interacts with UHRF2/NIRF. In terms of processing, ubiquitinated; mediated by UHRF2 and leading to its subsequent proteasomal degradation. Post-translationally, N-terminally acetylated in a HYPK-dependent manner by the NatA acetyltransferase complex which is composed of NAA10 and NAA15.

The protein resides in the nucleus. May be involved in cell cycle regulation. This is PEST proteolytic signal-containing nuclear protein (Pcnp) from Mus musculus (Mouse).